The sequence spans 171 residues: ATP synthase subunit b (171 aa).

The helical transmembrane segment at 31-51 (FFVVLAIFLVVLAVIGTFVVP) threads the bilayer.

This sequence belongs to the ATPase B chain family. In terms of assembly, F-type ATPases have 2 components, F(1) - the catalytic core - and F(0) - the membrane proton channel. F(1) has five subunits: alpha(3), beta(3), gamma(1), delta(1), epsilon(1). F(0) has three main subunits: a(1), b(2) and c(10-14). The alpha and beta chains form an alternating ring which encloses part of the gamma chain. F(1) is attached to F(0) by a central stalk formed by the gamma and epsilon chains, while a peripheral stalk is formed by the delta and b chains.

The protein localises to the cell membrane. F(1)F(0) ATP synthase produces ATP from ADP in the presence of a proton or sodium gradient. F-type ATPases consist of two structural domains, F(1) containing the extramembraneous catalytic core and F(0) containing the membrane proton channel, linked together by a central stalk and a peripheral stalk. During catalysis, ATP synthesis in the catalytic domain of F(1) is coupled via a rotary mechanism of the central stalk subunits to proton translocation. Functionally, component of the F(0) channel, it forms part of the peripheral stalk, linking F(1) to F(0). This Mycobacterium bovis (strain ATCC BAA-935 / AF2122/97) protein is ATP synthase subunit b.